The following is a 407-amino-acid chain: Cytochrome P450-pinF2, plant-inducible (407 aa).

Heme is bound at residue Cys356.

This sequence belongs to the cytochrome P450 family. The cofactor is heme.

Not essential for virulence, but may be involved in the detoxification of plant protective agents at the site of wounding. This chain is Cytochrome P450-pinF2, plant-inducible (cyp104), found in Rhizobium radiobacter (Agrobacterium tumefaciens).